The following is a 278-amino-acid chain: MKEIYRLVDVSYKYPNGSIALDNVNLNIYKNEVVAILGPNGAGKTTLLKILDGLVFPDKGEVYFEGKKLTDEILRDKELMKEFRRKVGFVFQNPDVMLFNPTVWDEVAFSPLHLYSKEKAIEVTDKTLKDMKIYHLKDRHPYNLSGGEKKKVSISCILSVEPEVILMDEPTSALDPKSRAEIMNLIKSFKECGKTVVLVTHDLNLACLADRCYVLNKKVIFEGKVKDLFSLNLDELNLDVPEISKLFIKLKNMGYNINEIPVTLDEAVNIISKLFQKY.

The region spanning 5–242 (YRLVDVSYKY…LDELNLDVPE (238 aa)) is the ABC transporter domain. An ATP-binding site is contributed by 38–45 (GPNGAGKT).

The protein belongs to the ABC transporter superfamily.

Its subcellular location is the cell membrane. Its function is as follows. Probably part of an ABC transporter complex. Responsible for energy coupling to the transport system. The chain is Putative ABC transporter ATP-binding protein MJ1572 from Methanocaldococcus jannaschii (strain ATCC 43067 / DSM 2661 / JAL-1 / JCM 10045 / NBRC 100440) (Methanococcus jannaschii).